The following is a 422-amino-acid chain: Serine--tRNA ligase (422 aa).

L-serine is bound at residue 231–233 (TAE). Residue 261-263 (RSE) coordinates ATP. Glu-284 is a binding site for L-serine. An ATP-binding site is contributed by 348-351 (EISS). Ser-383 is an L-serine binding site.

It belongs to the class-II aminoacyl-tRNA synthetase family. Type-1 seryl-tRNA synthetase subfamily. In terms of assembly, homodimer. The tRNA molecule binds across the dimer.

It localises to the cytoplasm. It catalyses the reaction tRNA(Ser) + L-serine + ATP = L-seryl-tRNA(Ser) + AMP + diphosphate + H(+). The enzyme catalyses tRNA(Sec) + L-serine + ATP = L-seryl-tRNA(Sec) + AMP + diphosphate + H(+). Its pathway is aminoacyl-tRNA biosynthesis; selenocysteinyl-tRNA(Sec) biosynthesis; L-seryl-tRNA(Sec) from L-serine and tRNA(Sec): step 1/1. Functionally, catalyzes the attachment of serine to tRNA(Ser). Is also able to aminoacylate tRNA(Sec) with serine, to form the misacylated tRNA L-seryl-tRNA(Sec), which will be further converted into selenocysteinyl-tRNA(Sec). This chain is Serine--tRNA ligase, found in Mycoplasmopsis agalactiae (strain NCTC 10123 / CIP 59.7 / PG2) (Mycoplasma agalactiae).